Consider the following 117-residue polypeptide: Cliotide T9 (117 aa).

The N-terminal stretch at 1-25 (MAYVRLACLAVIFFFAASVMFTVEA) is a signal peptide. Residues 26–55 (GIPCGESCVFIPCLTTVVGCSCKNKVCYNN) constitute a cross-link (cyclopeptide (Gly-Asn)). Disulfide bonds link Cys-29/Cys-45, Cys-33/Cys-47, and Cys-38/Cys-52. Residues 56–117 (HVIAAEANSI…YLLKDFLKMP (62 aa)) constitute a propeptide, removed in mature form.

Post-translationally, contains 3 disulfide bonds. In terms of processing, this is a cyclic peptide. Expressed in seed but not in root, nodule, flower, stem, shoot, leaf and pod (at protein level).

Functionally, probably participates in a plant defense mechanism. This Clitoria ternatea (Butterfly pea) protein is Cliotide T9.